The chain runs to 271 residues: Type III pantothenate kinase (271 aa).

Residue 6–13 (DVRNTNIV) coordinates ATP. Residue 109–112 (GADR) participates in substrate binding. Asp-111 (proton acceptor) is an active-site residue. K(+) is bound at residue Asp-131. Position 134 (Thr-134) interacts with ATP. Thr-186 contacts substrate.

Belongs to the type III pantothenate kinase family. In terms of assembly, homodimer. NH4(+) serves as cofactor. The cofactor is K(+).

It localises to the cytoplasm. It catalyses the reaction (R)-pantothenate + ATP = (R)-4'-phosphopantothenate + ADP + H(+). It participates in cofactor biosynthesis; coenzyme A biosynthesis; CoA from (R)-pantothenate: step 1/5. Catalyzes the phosphorylation of pantothenate (Pan), the first step in CoA biosynthesis. The sequence is that of Type III pantothenate kinase from Rhodococcus jostii (strain RHA1).